A 436-amino-acid polypeptide reads, in one-letter code: Serine protease hepsin (436 aa).

The tract at residues 1 to 29 is disordered; the sequence is MAKEDEEPGAHRGGSTCSRPQPGKGGRTA. Over 1 to 38 the chain is Cytoplasmic; it reads MAKEDEEPGAHRGGSTCSRPQPGKGGRTAACCSRPKVA. The helical; Signal-anchor for type II membrane protein transmembrane segment at 39-59 threads the bilayer; the sequence is ALIVGTLLFLTGIGAASWAIV. Residues 60–436 lie on the Extracellular side of the membrane; that stretch reads TILLQSDQEP…SEASGMVTQP (377 aa). The SRCR domain maps to 73–170; the sequence is VQLSPGDSRL…RGRFLTATCQ (98 aa). Intrachain disulfides connect cysteine 96–cysteine 159, cysteine 109–cysteine 169, cysteine 138–cysteine 157, cysteine 172–cysteine 296, cysteine 207–cysteine 223, cysteine 310–cysteine 378, cysteine 341–cysteine 357, and cysteine 368–cysteine 400. An N-linked (GlcNAc...) asparagine glycan is attached at asparagine 131. The Peptidase S1 domain maps to 182–424; that stretch reads IVGGQDSSLG…FREWIFKAIK (243 aa). Catalysis depends on charge relay system residues histidine 222 and aspartate 276. Catalysis depends on serine 372, which acts as the Charge relay system.

The protein belongs to the peptidase S1 family. In terms of tissue distribution, detected in kidney, in thick ascending tubule epithelial cells (at protein level). Detected in kidney and liver.

The protein resides in the apical cell membrane. It is found in the cell membrane. Its subcellular location is the secreted. The enzyme catalyses Cleavage after basic amino-acid residues, with Arg strongly preferred to Lys.. Its function is as follows. Serine protease that cleaves extracellular substrates, and contributes to the proteolytic processing of growth factors, such as HGF and MST1/HGFL. Plays a role in cell growth and maintenance of cell morphology. Plays a role in the proteolytic processing of ACE2. Mediates the proteolytic cleavage of urinary UMOD that is required for UMOD polymerization. The protein is Serine protease hepsin (Hpn) of Mus musculus (Mouse).